We begin with the raw amino-acid sequence, 215 residues long: Ubiquitin-conjugating enzyme E2 S (215 aa).

One can recognise a UBC core domain in the interval Asp-9 to Ser-155. The active-site Glycyl thioester intermediate is Cys-93. The tract at residues Ile-159–Leu-215 is disordered. The segment covering Ser-161 to Ser-190 has biased composition (low complexity).

This sequence belongs to the ubiquitin-conjugating enzyme family.

It carries out the reaction S-ubiquitinyl-[E1 ubiquitin-activating enzyme]-L-cysteine + [E2 ubiquitin-conjugating enzyme]-L-cysteine = [E1 ubiquitin-activating enzyme]-L-cysteine + S-ubiquitinyl-[E2 ubiquitin-conjugating enzyme]-L-cysteine.. The protein operates within protein modification; protein ubiquitination. In terms of biological role, catalyzes the covalent attachment of ubiquitin to other proteins. Acts as an essential factor of the anaphase promoting complex/cyclosome (APC/C), a cell cycle-regulated ubiquitin ligase that controls progression through mitosis. Acts by specifically elongating polyubiquitin chains initiated by the E2 enzyme ubch10 on APC/C substrates, enhancing the degradation of APC/C substrates by the proteasome and promoting mitotic exit. The sequence is that of Ubiquitin-conjugating enzyme E2 S (ube2s) from Dictyostelium discoideum (Social amoeba).